Consider the following 540-residue polypeptide: DNA-(apurinic or apyrimidinic site) endonuclease (540 aa).

Mg(2+)-binding residues include Asn-206 and Glu-239. Positions 256–276 (NNKVYGGKKNEGEERNRGSVK) are disordered. The segment covering 263 to 276 (KKNEGEERNRGSVK) has biased composition (basic and acidic residues). Mg(2+) is bound by residues Asp-400, Asn-402, Asp-530, and His-531. The Proton acceptor role is filled by His-531.

The protein belongs to the DNA repair enzymes AP/ExoA family. Mg(2+) is required as a cofactor. Mn(2+) serves as cofactor. May be proteolytically cleaved.

It localises to the mitochondrion. It carries out the reaction Exonucleolytic cleavage in the 3'- to 5'-direction to yield nucleoside 5'-phosphates.. Its function is as follows. Multifunctional protein that plays a central role in mitochondrial DNA base excision repair pathway induced by oxidative stress. Has apurinic/apyrimidinic (AP) endonuclease activity towards double-stranded DNA (dsDNA). Has nucleotide incision repair (NIR) activity; acts on dsDNA with oxidized bases thymine glycol and 5,6-dihydro-2'-deoxyuridine. Has 3'-5' exonuclease; can use dsDNA templates with 3'-OH termini including blunt-end, gapped and mismatched 3'-recessed. Has 3'-phosphatase activity; cleaves 3'-phosphate from blunt, recessed and gapped dsDNA templates, followed by 3'-5' exonuclease activity. Has RNase H-like activity; cleaves RNA on 3'-recessed RNA-DNA duplex. Plays a role in merosome infection of host erythrocytes. The sequence is that of DNA-(apurinic or apyrimidinic site) endonuclease from Plasmodium berghei (strain Anka).